We begin with the raw amino-acid sequence, 233 residues long: Transcriptional regulatory protein PrrA (233 aa).

The region spanning 9–123 (RVLVVDDDSD…ELVARVKALL (115 aa)) is the Response regulatory domain. Aspartate 58 is modified (4-aspartylphosphate). Residues 134-232 (SETIAVGPLE…VRGVGFVLRM (99 aa)) constitute a DNA-binding region (ompR/PhoB-type).

In terms of processing, phosphorylated by PrrB at Asp-58.

It is found in the cytoplasm. Member of the two-component regulatory system PrrB/PrrA that is involved specifically in early intracellular multiplication of Mycobacterium and is essential for its viability. Upon phosphorylation by PrrB, functions as a transcription regulator by direct binding to promoter regions of target genes to positively regulate their expression. Autoregulates its own expression. The sequence is that of Transcriptional regulatory protein PrrA (prrA) from Mycobacterium leprae (strain TN).